The primary structure comprises 504 residues: CDK5 regulatory subunit-associated protein 3 (504 aa).

Short sequence motifs (shuffled ATG8-binding motif) lie at residues 266 to 269 (IDWG), 290 to 293 (IDWG), and 308 to 311 (IDWG). The interval 268–504 (WGDFGLEAVS…RPVNLMGTSV (237 aa)) is required for interaction with UFL1 and mediates interaction with CHEK1. The tract at residues 353–368 (DELMELEIFLSQRAVE) is RPL10a-binding domain (RBD). Residue Lys-448 forms a Glycyl lysine isopeptide (Lys-Gly) (interchain with G-Cter in SUMO2) linkage.

Belongs to the CDK5RAP3 family. As to quaternary structure, substrate adapter component of the UFM1 ribosome E3 ligase (UREL) complex, composed of UFL1, DDRGK1 and CDK5RAP3. Interaction with UFL1 anchors CDK5RAP3 in the cytoplasm, preventing its translocation to the nucleus which allows expression of the CCND1 cyclin and progression of cells through the G1/S transition. Interacts with ATG8 family proteins MAP1LC3A, MAP1LC3B, GABARAP, GABARAPL1 and GABARAPL2. Interacts with CDK5R1; competes with CDK5RAP1 and CDK5RAP2. Interacts with RELA. Interacts with CHEK1; may negatively regulate CHEK1 and thereby stimulate entry into mitosis. Interacts with CDKN2A/ARF and MDM2; forms a ternary complex involved in regulation of p53/TP53. Interacts with MAPK14. Interacts with CCNB1. Interacts with TUBG1; may regulate CDK5RAP3 in mitotic G2/M transition checkpoint. In terms of processing, may be phosphorylated by CDK5. Post-translationally, ubiquitinated. Probably triggers proteasomal degradation and is negatively regulated by UFL1. May be ufmylated. In terms of processing, cleaved by caspases early during apoptosis, the resulting peptides may play a role in rupture of the nuclear envelope. Expressed in vascular endothelium. Up-regulated in failing heart. Highly expressed in the ventricular section in subacute and chronic ischemic heart failure.

It is found in the endoplasmic reticulum membrane. The protein localises to the cytoplasm. The protein resides in the nucleus. Its subcellular location is the cytoskeleton. It localises to the microtubule organizing center. It is found in the centrosome. In terms of biological role, substrate adapter of E3 ligase complexes mediating ufmylation, the covalent attachment of the ubiquitin-like modifier UFM1 to substrate proteins, and which is involved in various processes, such as ribosome recycling and reticulophagy (also called ER-phagy). As part of the UREL complex, plays a key role in ribosome recycling by promoting mono-ufmylation of RPL26/uL24 subunit of the 60S ribosome. Ufmylation of RPL26/uL24 occurs on free 60S ribosomes following ribosome dissociation: it weakens the junction between post-termination 60S subunits and SEC61 translocons, promoting release and recycling of the large ribosomal subunit from the endoplasmic reticulum membrane. Ufmylation of RPL26/uL24 and subsequent 60S ribosome recycling either take place after normal termination of translation or after ribosome stalling during cotranslational translocation at the endoplasmic reticulum. Within the UREL complex, CDK5RAP3 acts as a substrate adapter that constrains UFL1 ligase activity to mono-ufmylate RPL26/uL24 at 'Lys-134'. The UREL complex is also involved in reticulophagy in response to endoplasmic reticulum stress by promoting ufmylation of proteins such as CYB5R3, thereby promoting lysosomal degradation of ufmylated proteins. Also acts as a regulator of transcription: negatively regulates NF-kappa-B-mediated gene transcription through the control of RELA phosphorylation. Also regulates mitotic G2/M transition checkpoint and mitotic G2 DNA damage checkpoint. Through its interaction with CDKN2A/ARF and MDM2 may induce MDM2-dependent p53/TP53 ubiquitination, stabilization and activation in the nucleus, thereby promoting G1 cell cycle arrest and inhibition of cell proliferation. May also play a role in the rupture of the nuclear envelope during apoptosis. May regulate MAPK14 activity by regulating its dephosphorylation by PPM1D/WIP1. Required for liver development. The polypeptide is CDK5 regulatory subunit-associated protein 3 (Rattus norvegicus (Rat)).